The following is a 273-amino-acid chain: Small ribosomal subunit protein eS1 (273 aa).

This sequence belongs to the eukaryotic ribosomal protein eS1 family. Component of the small ribosomal subunit. Mature ribosomes consist of a small (40S) and a large (60S) subunit. The 40S subunit contains about 33 different proteins and 1 molecule of RNA (18S). The 60S subunit contains about 49 different proteins and 3 molecules of RNA (25S, 5.8S and 5S).

Its subcellular location is the cytoplasm. The sequence is that of Small ribosomal subunit protein eS1 (rps3a) from Dictyostelium discoideum (Social amoeba).